The chain runs to 820 residues: Phenylalanine--tRNA ligase beta subunit (820 aa).

A tRNA-binding domain is found at 39–150 (PAPVGGVLLV…GTAAPGTPLR (112 aa)). The B5 domain maps to 435–510 (EVPQTITTTG…RLHGFTELPE (76 aa)). Mg(2+) is bound by residues aspartate 488, aspartate 494, glutamate 497, and glutamate 498. An FDX-ACB domain is found at 727–818 (SRAPAAWRDL…AVKARGWAIR (92 aa)).

Belongs to the phenylalanyl-tRNA synthetase beta subunit family. Type 1 subfamily. Tetramer of two alpha and two beta subunits. It depends on Mg(2+) as a cofactor.

It localises to the cytoplasm. It carries out the reaction tRNA(Phe) + L-phenylalanine + ATP = L-phenylalanyl-tRNA(Phe) + AMP + diphosphate + H(+). The chain is Phenylalanine--tRNA ligase beta subunit (pheT) from Deinococcus radiodurans (strain ATCC 13939 / DSM 20539 / JCM 16871 / CCUG 27074 / LMG 4051 / NBRC 15346 / NCIMB 9279 / VKM B-1422 / R1).